We begin with the raw amino-acid sequence, 78 residues long: Acyl carrier protein (78 aa).

Residues 1-76 (MAIHPKVKDI…DVASYLEKKG (76 aa)) form the Carrier domain. An O-(pantetheine 4'-phosphoryl)serine modification is found at S36.

Belongs to the acyl carrier protein (ACP) family. In terms of processing, 4'-phosphopantetheine is transferred from CoA to a specific serine of apo-ACP by AcpS. This modification is essential for activity because fatty acids are bound in thioester linkage to the sulfhydryl of the prosthetic group.

The protein resides in the cytoplasm. The protein operates within lipid metabolism; fatty acid biosynthesis. Carrier of the growing fatty acid chain in fatty acid biosynthesis. In Bdellovibrio bacteriovorus (strain ATCC 15356 / DSM 50701 / NCIMB 9529 / HD100), this protein is Acyl carrier protein.